The primary structure comprises 1368 residues: DNA-directed RNA polymerase subunit beta (1368 aa).

The protein belongs to the RNA polymerase beta chain family. In terms of assembly, the RNAP catalytic core consists of 2 alpha, 1 beta, 1 beta' and 1 omega subunit. When a sigma factor is associated with the core the holoenzyme is formed, which can initiate transcription.

It carries out the reaction RNA(n) + a ribonucleoside 5'-triphosphate = RNA(n+1) + diphosphate. DNA-dependent RNA polymerase catalyzes the transcription of DNA into RNA using the four ribonucleoside triphosphates as substrates. The sequence is that of DNA-directed RNA polymerase subunit beta from Burkholderia lata (strain ATCC 17760 / DSM 23089 / LMG 22485 / NCIMB 9086 / R18194 / 383).